The following is a 124-amino-acid chain: Testis-expressed protein 54 (124 aa).

The segment covering 1–10 has biased composition (basic and acidic residues); the sequence is MGCCQDKDFE. 2 disordered regions span residues 1-77 and 90-124; these read MGCC…SNES and FGRRGSSRPSKRQPDQIRKQESPIREGNQEEPEKG. The span at 11–30 shows a compositional bias: acidic residues; sequence MSDEQSKEEESEDGREDETT. Composition is skewed to basic and acidic residues over residues 34 to 50 and 101 to 124; these read RGPRECERGLPEGRGEL and RQPDQIRKQESPIREGNQEEPEKG.

Expressed in Testis.

The sequence is that of Testis-expressed protein 54 from Homo sapiens (Human).